The primary structure comprises 970 residues: ATP-dependent DNA helicase DDX11 (970 aa).

Residues 9-445 enclose the Helicase ATP-binding domain; that stretch reads GAIHFPFPFT…KNLMYLKQIL (437 aa). 44 to 51 lines the ATP pocket; sequence SPTGTGKS. Ser262 is modified (phosphoserine). Residues Cys267 and Cys285 each coordinate [4Fe-4S] cluster. Basic and acidic residues predominate over residues 289–304; that stretch reads QRSRHEKKKGAEEEKP. A disordered region spans residues 289–312; the sequence is QRSRHEKKKGAEEEKPKRRRQEKQ. [4Fe-4S] cluster is bound by residues Cys315 and Cys350. The short motif at 393–396 is the DEAH box element; sequence DEAH. The tract at residues 818 to 849 is disordered; it reads TLSPRPGTPREGSGGEPVHEGRQPVHRQGHQA.

This sequence belongs to the DEAD box helicase family. DEAH subfamily. DDX11/CHL1 sub-subfamily. In terms of assembly, associates with the CTF18-RFC complex. Associates with a cohesin complex composed of RAD21, SMC1 proteins and SMC3. Interacts with CHTF18. Interacts with DSCC1. Interacts with FEN1; this interaction is direct and increases flap endonuclease activity of FEN1. Interacts with PCNA. Interacts with POLR1A and UBTF. Interacts with RAD21, SMC1 proteins and SMC3. Interacts with RFC2. Interacts with TIMELESS; this interaction increases recruitment of both proteins onto chromatin in response to replication stress induction by hydroxyurea. (Microbial infection) Interacts with bovine papillomavirus type 1 regulatory protein E2; this interaction stimulates the recruitment of E2 onto mitotic chromosomes. The cofactor is Mg(2+). It depends on [4Fe-4S] cluster as a cofactor. As to expression, expressed in melanoma cells. Not detected in epidermal melanocytes of normal skin (at protein level). Highly expressed in spleen, B-cells, thymus, testis, ovary, small intestine and pancreas. Very low expression seen in brain. Expressed in dividing cells and/or cells undergoing high levels of recombination. No expression detected in cells signaled to terminally differentiate. Expressed weakly in keratinocytes.

It localises to the nucleus. The protein localises to the nucleolus. Its subcellular location is the cytoplasm. The protein resides in the cytoskeleton. It is found in the spindle pole. It localises to the midbody. The protein localises to the microtubule organizing center. Its subcellular location is the centrosome. The protein resides in the chromosome. It carries out the reaction Couples ATP hydrolysis with the unwinding of duplex DNA at the replication fork by translocating in the 5'-3' direction. This creates two antiparallel DNA single strands (ssDNA). The leading ssDNA polymer is the template for DNA polymerase III holoenzyme which synthesizes a continuous strand.. The enzyme catalyses ATP + H2O = ADP + phosphate + H(+). Its activity is regulated as follows. ATPase activity is stimulated by high magnesium salt levels (up to a 0.1 M), and potassium salts (glutamate, chloride or acetate) are more effective than the corresponding sodium salts. ATPase activity is enhanced by the long non-coding RNA (lncRNA) cohesion regulator noncoding RNA (CONCR). Double-stranded DNA helicase activity is maximal with magnesium ions at low concentrations (0.5-1 mM) whereas is markedly inhibited at higher levels (5 mM and above). Double-stranded DNA helicase activity is stimulated by 25-50 mM potassium acetate, stimulated to a lesser extent by 25 mM of ammonium acetate, and markedly inhibited by sodium acetate. In terms of biological role, DNA-dependent ATPase and ATP-dependent DNA helicase that participates in various functions in genomic stability, including DNA replication, DNA repair and heterochromatin organization as well as in ribosomal RNA synthesis. Its double-stranded DNA helicase activity requires either a minimal 5'-single-stranded tail length of approximately 15 nt (flap substrates) or 10 nt length single-stranded gapped DNA substrates of a partial duplex DNA structure for helicase loading and translocation along DNA in a 5' to 3' direction. The helicase activity is capable of displacing duplex regions up to 100 bp, which can be extended up to 500 bp by the replication protein A (RPA) or the cohesion CTF18-replication factor C (Ctf18-RFC) complex activities. Also shows ATPase- and helicase activities on substrates that mimic key DNA intermediates of replication, repair and homologous recombination reactions, including forked duplex, anti-parallel G-quadruplex and three-stranded D-loop DNA molecules. Plays a role in DNA double-strand break (DSB) repair at the DNA replication fork during DNA replication recovery from DNA damage. Recruited with TIMELESS factor upon DNA-replication stress response at DNA replication fork to preserve replication fork progression, and hence ensure DNA replication fidelity. Also cooperates with TIMELESS factor during DNA replication to regulate proper sister chromatid cohesion and mitotic chromosome segregation. Stimulates 5'-single-stranded DNA flap endonuclease activity of FEN1 in an ATP- and helicase-independent manner; and hence it may contribute in Okazaki fragment processing at DNA replication fork during lagging strand DNA synthesis. Its ability to function at DNA replication fork is modulated by its binding to long non-coding RNA (lncRNA) cohesion regulator non-coding RNA DDX11-AS1/CONCR, which is able to increase both DDX11 ATPase activity and binding to DNA replicating regions. Also plays a role in heterochromatin organization. Involved in rRNA transcription activation through binding to active hypomethylated rDNA gene loci by recruiting UBTF and the RNA polymerase Pol I transcriptional machinery. Plays a role in embryonic development and prevention of aneuploidy. Involved in melanoma cell proliferation and survival. Associates with chromatin at DNA replication fork regions. Binds to single- and double-stranded DNAs. Functionally, (Microbial infection) Required for bovine papillomavirus type 1 regulatory protein E2 loading onto mitotic chromosomes during DNA replication for the viral genome to be maintained and segregated. The sequence is that of ATP-dependent DNA helicase DDX11 from Homo sapiens (Human).